The sequence spans 185 residues: Large ribosomal subunit protein uL5 (185 aa).

The protein belongs to the universal ribosomal protein uL5 family. Part of the 50S ribosomal subunit; part of the 5S rRNA/L5/L18/L25 subcomplex. Contacts the 5S rRNA and the P site tRNA. Forms a bridge to the 30S subunit in the 70S ribosome.

Functionally, this is one of the proteins that bind and probably mediate the attachment of the 5S RNA into the large ribosomal subunit, where it forms part of the central protuberance. In the 70S ribosome it contacts protein S13 of the 30S subunit (bridge B1b), connecting the 2 subunits; this bridge is implicated in subunit movement. Contacts the P site tRNA; the 5S rRNA and some of its associated proteins might help stabilize positioning of ribosome-bound tRNAs. The chain is Large ribosomal subunit protein uL5 from Azorhizobium caulinodans (strain ATCC 43989 / DSM 5975 / JCM 20966 / LMG 6465 / NBRC 14845 / NCIMB 13405 / ORS 571).